A 249-amino-acid chain; its full sequence is Methyltransferase 1 (249 aa).

This sequence belongs to the FkbM methyltransferase family.

It functions in the pathway secondary metabolite biosynthesis. In terms of biological role, methyltransferase; part of the pathway that mediates the biosynthesis of tenellin-type 2-pyridones, iron-chelating compounds involved in iron stress tolerance, competition with the natural competitor fungus Metarhizium robertsii and insect hosts infection. Methylates pyridovericin-N-O-(beta-D-glucopyranoside) produced by the UDP-glucosyltransferase GT1 to yield pyridovericin-N-O-(4-O-methyl-beta-D-glucopyranoside) (PMGP). The pathway begins with the assembly of the polyketide-amino acid backbone by the hybrid PKS-NRPS tenS with the help of the enoyl reductase tenC. These enzymes catalyze the synthesis of the pyrrolidine-2-dione intermediates pretellinin A, 11-hydropretellenin A, 12-hydropretellenin A, 13-hydropretellenin A, 14-hydropretellenin A, 12-oxopretellenin A and prototellinin D. The cytochrome P450 monooxygenase tenA then catalyzes an oxidative ring expansion of pretenellin A and 14-hydropretellenin A to form the 2-pyridone core, leading to pretenellin B and pyridovericin, respectively. The cytochrome P450 monooxygenase tenB is then required for the selective N-hydroxylation of the 2-pyridone nitrogen of yield tellinin and 15-hydroxytellenin (15-HT), respectively. The UDP-glucosyltransferase GT1 and the methyltransferase MT1, located outside the tenS gene cluster, contribute to the stepwise glycosylation and methylation of 15-HT to obtain the glycoside pyridovericin-N-O-(4-O-methyl-beta-D-glucopyranoside) (PMGP). Additional related compounds such as 1-O-methyl-15-HT, (8Z)-1-O-methyl-15-HT, and O-methyltenellin A are also produced but the enzymes involved in their biosynthesis have still to be determined. This chain is Methyltransferase 1, found in Beauveria bassiana (strain ARSEF 2860) (White muscardine disease fungus).